The chain runs to 234 residues: Peroxiredoxin-2E, chloroplastic (234 aa).

A chloroplast-targeting transit peptide spans 1–70 (MATSLSVSRF…TRSFATTPVT (70 aa)). Residues 73 to 234 (ISVGDKLPDS…SSAEDMLKAL (162 aa)) form the Thioredoxin domain. A Phosphoserine modification is found at Ser82. Cys121 functions as the Cysteine sulfenic acid (-SOH) intermediate in the catalytic mechanism.

Belongs to the peroxiredoxin family. Prx5 subfamily. As to quaternary structure, monomer. Expressed in all tissues but predominantly in buds, siliques and seeds.

It localises to the plastid. It is found in the chloroplast stroma. The catalysed reaction is [glutaredoxin]-dithiol + a hydroperoxide = [glutaredoxin]-disulfide + an alcohol + H2O. Thiol-specific peroxidase that catalyzes the reduction of hydrogen peroxide and organic hydroperoxides to water and alcohols, respectively. Plays a role in cell protection against oxidative stress by detoxifying peroxides. May be involved in chloroplast redox homeostasis. The chain is Peroxiredoxin-2E, chloroplastic (PRXIIE) from Arabidopsis thaliana (Mouse-ear cress).